A 612-amino-acid chain; its full sequence is Probable translation initiation factor IF-2 (612 aa).

One can recognise a tr-type G domain in the interval 11–229 (LRQPIVVVLG…VLAGLTQRYL (219 aa)). Residues 20-27 (GHVDHGKT) form a G1 region. A GTP-binding site is contributed by 20–27 (GHVDHGKT). The interval 45–49 (LITQH) is G2. A G3 region spans residues 84–87 (DTPG). GTP contacts are provided by residues 84–88 (DTPGH) and 138–141 (NKID). A G4 region spans residues 138 to 141 (NKID). Residues 207-209 (SAK) are G5.

The protein belongs to the TRAFAC class translation factor GTPase superfamily. Classic translation factor GTPase family. IF-2 subfamily.

Functionally, function in general translation initiation by promoting the binding of the formylmethionine-tRNA to ribosomes. Seems to function along with eIF-2. This is Probable translation initiation factor IF-2 from Hyperthermus butylicus (strain DSM 5456 / JCM 9403 / PLM1-5).